The sequence spans 176 residues: Glyoxalase domain-containing protein RDO1 (176 aa).

Positions 53–172 (SLDHLVITCH…DNNLIELSSY (120 aa)) constitute a VOC domain. E168 (proton donor/acceptor) is an active-site residue.

This sequence belongs to the glyoxalase I family.

It participates in secondary metabolite biosynthesis. Glyoxalase domain-containing protein; part of the gene cluster that mediates the biosynthesis of itaconic acid and 2-hydroxyparaconate. Cis-aconitate is secreted by the mitochondrial tricarboxylate transporter MTT1. In the cytosol cis-aconitate is converted into trans-aconitate via isomerization by the aconitate-delta-isomerase ADI1. Decarboxylation of trans-aconitate by the trans-aconitate decarboxylase TAD1 then leads then to the production of itaconic acid. The cytochrome P450 monooxygenase CYP3 further converts itaconate to 2-hydroxyparaconate via oxidation of the double bond, leading to a transient epoxide, which can subsequently be lactonized to produce 2-hydroxyparaconate. Secretion of itaconate and possibly 2-hydroxyparaconate into the medium is mediated by the major facilitator ITP1. The glyoxalase domain-containing protein RDO1 is not involved in the biosynthesis of itaconate and 2-hydroxyparaconate, however, it might play a role in the further conversion of 2-hydroxyparaconate to itatartarate. In Mycosarcoma maydis (Corn smut fungus), this protein is Glyoxalase domain-containing protein RDO1.